Here is a 252-residue protein sequence, read N- to C-terminus: 5'-nucleotidase SurE (252 aa).

Positions 8, 9, 39, and 91 each coordinate a divalent metal cation.

It belongs to the SurE nucleotidase family. A divalent metal cation serves as cofactor.

It localises to the cytoplasm. The enzyme catalyses a ribonucleoside 5'-phosphate + H2O = a ribonucleoside + phosphate. In terms of biological role, nucleotidase that shows phosphatase activity on nucleoside 5'-monophosphates. The polypeptide is 5'-nucleotidase SurE (Legionella pneumophila (strain Lens)).